The sequence spans 82 residues: ATP synthase subunit c (82 aa).

2 helical membrane-spanning segments follow: residues 7 to 27 (FVALAAGLIIGLGAVGACIGI) and 53 to 73 (FLLAGLIDAAFLIGVGIAMMF).

This sequence belongs to the ATPase C chain family. F-type ATPases have 2 components, F(1) - the catalytic core - and F(0) - the membrane proton channel. F(1) has five subunits: alpha(3), beta(3), gamma(1), delta(1), epsilon(1). F(0) has three main subunits: a(1), b(2) and c(10-14). The alpha and beta chains form an alternating ring which encloses part of the gamma chain. F(1) is attached to F(0) by a central stalk formed by the gamma and epsilon chains, while a peripheral stalk is formed by the delta and b chains.

The protein localises to the cell inner membrane. In terms of biological role, f(1)F(0) ATP synthase produces ATP from ADP in the presence of a proton or sodium gradient. F-type ATPases consist of two structural domains, F(1) containing the extramembraneous catalytic core and F(0) containing the membrane proton channel, linked together by a central stalk and a peripheral stalk. During catalysis, ATP synthesis in the catalytic domain of F(1) is coupled via a rotary mechanism of the central stalk subunits to proton translocation. Functionally, key component of the F(0) channel; it plays a direct role in translocation across the membrane. A homomeric c-ring of between 10-14 subunits forms the central stalk rotor element with the F(1) delta and epsilon subunits. The chain is ATP synthase subunit c from Polaromonas sp. (strain JS666 / ATCC BAA-500).